Here is a 432-residue protein sequence, read N- to C-terminus: Glutamyl-tRNA reductase (432 aa).

Substrate contacts are provided by residues 55–58, S114, 119–121, and Q125; these read TCNR and ETQ. The active-site Nucleophile is the C56. Residue 194–199 participates in NADP(+) binding; the sequence is GAGEMI.

It belongs to the glutamyl-tRNA reductase family. Homodimer.

The catalysed reaction is (S)-4-amino-5-oxopentanoate + tRNA(Glu) + NADP(+) = L-glutamyl-tRNA(Glu) + NADPH + H(+). Its pathway is porphyrin-containing compound metabolism; protoporphyrin-IX biosynthesis; 5-aminolevulinate from L-glutamyl-tRNA(Glu): step 1/2. Its function is as follows. Catalyzes the NADPH-dependent reduction of glutamyl-tRNA(Glu) to glutamate 1-semialdehyde (GSA). In Burkholderia ambifaria (strain MC40-6), this protein is Glutamyl-tRNA reductase.